The following is an 892-amino-acid chain: DNA mismatch repair protein MutS (892 aa).

Residue 607–614 (GPNMSGKS) coordinates ATP. Residues 833-855 (EESQLSFFGAEQSSKKQDKPALD) form a disordered region. A compositionally biased stretch (basic and acidic residues) spans 845 to 855 (SSKKQDKPALD).

Belongs to the DNA mismatch repair MutS family.

This protein is involved in the repair of mismatches in DNA. It is possible that it carries out the mismatch recognition step. This protein has a weak ATPase activity. In Bacillus anthracis (strain A0248), this protein is DNA mismatch repair protein MutS.